The following is a 279-amino-acid chain: MTTRIDRRMAKLKTEGRPALVTYFMGGDPDYDTSLSIMKALPGAGSDIIELGMPFSDPMADGPAIQAAGLRALKGGQTLVKTLKMASEFRAGDNETPIVLMGYYNPIYIYGVDRFLKDALASGIDGLIVVDLPPEMDEELCIPALKAGINFIRLATPTTDDKRLPKVLQNTSGFVYYVSMTGITGSALADTGKVAAAVNRIKGHTDLPVCVGFGVKTAEQARVIGANADGVVVGTAIVNAVANVLGPKGEKTADPAEAVATLVSGLAQGVRSARLAAAE.

Active-site proton acceptor residues include Glu-50 and Asp-61.

Belongs to the TrpA family. In terms of assembly, tetramer of two alpha and two beta chains.

It catalyses the reaction (1S,2R)-1-C-(indol-3-yl)glycerol 3-phosphate + L-serine = D-glyceraldehyde 3-phosphate + L-tryptophan + H2O. The protein operates within amino-acid biosynthesis; L-tryptophan biosynthesis; L-tryptophan from chorismate: step 5/5. Its function is as follows. The alpha subunit is responsible for the aldol cleavage of indoleglycerol phosphate to indole and glyceraldehyde 3-phosphate. The sequence is that of Tryptophan synthase alpha chain from Mesorhizobium japonicum (strain LMG 29417 / CECT 9101 / MAFF 303099) (Mesorhizobium loti (strain MAFF 303099)).